Here is an 841-residue protein sequence, read N- to C-terminus: Serine/threonine-protein kinase/endoribonuclease IRE1a (841 aa).

A signal peptide spans 1-30 (MPPRCPFLRHLFFLLLLLSPWIMSPCGGAA). At 31 to 323 (DDVTYPIVPS…KQKYTYLFGQ (293 aa)) the chain is on the lumenal side. Asparagine 100, asparagine 104, asparagine 119, asparagine 132, and asparagine 221 each carry an N-linked (GlcNAc...) asparagine glycan. A helical transmembrane segment spans residues 324–344 (WSPVKLLAPLVLLGVVVSVFI). The Cytoplasmic portion of the chain corresponds to 345–841 (KKFSSRGSDV…FRKYFKCDII (497 aa)). The tract at residues 352–382 (SDVSLKAGPSKKKKNRKSAKDTNRQSVPRGQ) is disordered. One can recognise a Protein kinase domain in the interval 414–704 (FLSSKEIAKG…ATEVLLHPMF (291 aa)). ATP contacts are provided by residues 420-428 (IAKGSNGTV) and lysine 442. The active-site Proton acceptor is the aspartate 570. The KEN domain occupies 707–838 (SEMRLSFLRD…EEVFRKYFKC (132 aa)).

It belongs to the protein kinase superfamily. Ser/Thr protein kinase family. As to quaternary structure, homodimer; disulfide-linked. Dimer formation is driven by hydrophobic interactions within the N-terminal luminal domains and stabilized by disulfide bridges. The cofactor is Mg(2+). Post-translationally, autophosphorylated. In terms of tissue distribution, ubiquitous. Detected in the vascular bundles of young plants, leaves, roots, seedlings and in the receptacles of flowers and vascular bundles of the petals.

The protein localises to the endoplasmic reticulum membrane. The catalysed reaction is L-seryl-[protein] + ATP = O-phospho-L-seryl-[protein] + ADP + H(+). The enzyme catalyses L-threonyl-[protein] + ATP = O-phospho-L-threonyl-[protein] + ADP + H(+). With respect to regulation, the kinase domain is activated by trans-autophosphorylation. Kinase activity is required for activation of the endoribonuclease domain. In terms of biological role, senses unfolded proteins in the lumen of the endoplasmic reticulum via its N-terminal domain which leads to enzyme auto-activation. The active endoribonuclease domain splices bZIP60 mRNA to generate a new C-terminus, converting it into a potent unfolded-protein response transcriptional activator which then induces transcription of UPR target genes. Involved in organ growth regulation. Plays a role in plant immunity and abiotic stress responses. This Arabidopsis thaliana (Mouse-ear cress) protein is Serine/threonine-protein kinase/endoribonuclease IRE1a (IRE1A).